The sequence spans 394 residues: Elongation factor Tu-A (394 aa).

One can recognise a tr-type G domain in the interval 10–204; sequence KPHVNVGTIG…ALDTYIPEPE (195 aa). Positions 19–26 are G1; the sequence is GHVDHGKT. 19-26 is a GTP binding site; that stretch reads GHVDHGKT. Thr26 provides a ligand contact to Mg(2+). Positions 60 to 64 are G2; that stretch reads GITIN. The segment at 81–84 is G3; the sequence is DCPG. GTP-binding positions include 81–85 and 136–139; these read DCPGH and NKCD. A G4 region spans residues 136-139; sequence NKCD. A G5 region spans residues 174-176; the sequence is SAL.

It belongs to the TRAFAC class translation factor GTPase superfamily. Classic translation factor GTPase family. EF-Tu/EF-1A subfamily. In terms of assembly, monomer.

It localises to the cytoplasm. The catalysed reaction is GTP + H2O = GDP + phosphate + H(+). Functionally, GTP hydrolase that promotes the GTP-dependent binding of aminoacyl-tRNA to the A-site of ribosomes during protein biosynthesis. The chain is Elongation factor Tu-A from Vibrio cholerae serotype O1 (strain ATCC 39315 / El Tor Inaba N16961).